Reading from the N-terminus, the 185-residue chain is Ribosome-recycling factor (185 aa).

Belongs to the RRF family.

It is found in the cytoplasm. Functionally, responsible for the release of ribosomes from messenger RNA at the termination of protein biosynthesis. May increase the efficiency of translation by recycling ribosomes from one round of translation to another. This is Ribosome-recycling factor from Pseudomonas savastanoi pv. phaseolicola (strain 1448A / Race 6) (Pseudomonas syringae pv. phaseolicola (strain 1448A / Race 6)).